Reading from the N-terminus, the 493-residue chain is Serine/threonine-protein kinase chk-1 (493 aa).

In terms of domain architecture, Protein kinase spans 26-286 (YRVIRTLGEG…IEQIKTDPWF (261 aa)). Residues 32–40 (LGEGAFGEV) and Lys56 contribute to the ATP site. Asp150 acts as the Proton acceptor in catalysis. Residues 308 to 348 (DENSPDCNISSTQQADAVSTAKRRHLETPDKVAHVERQNAS) are disordered. Over residues 312–324 (PDCNISSTQQADA) the composition is skewed to polar residues. Basic and acidic residues predominate over residues 333–344 (LETPDKVAHVER).

It belongs to the protein kinase superfamily. CAMK Ser/Thr protein kinase family. NIM1 subfamily.

The protein resides in the cytoplasm. The protein localises to the nucleus. The catalysed reaction is L-seryl-[protein] + ATP = O-phospho-L-seryl-[protein] + ADP + H(+). The enzyme catalyses L-threonyl-[protein] + ATP = O-phospho-L-threonyl-[protein] + ADP + H(+). Its function is as follows. Serine/threonine-protein kinase which is required for checkpoint-mediated cell cycle arrest and activation of DNA repair in response to the presence of DNA damage or unreplicated DNA. May also negatively regulate cell cycle progression during unperturbed cell cycles. Required for checkpoint mediated cell cycle arrest in response to DNA damage in germline cells. Essential for embryogenesis. The protein is Serine/threonine-protein kinase chk-1 (chk-1) of Caenorhabditis briggsae.